Here is a 157-residue protein sequence, read N- to C-terminus: Transcription elongation factor GreA (157 aa).

Residues Glu-25–Leu-43 are compositionally biased toward basic and acidic residues. Positions Glu-25–Ala-47 are disordered. A coiled-coil region spans residues Leu-43–Asp-79.

It belongs to the GreA/GreB family.

Functionally, necessary for efficient RNA polymerase transcription elongation past template-encoded arresting sites. The arresting sites in DNA have the property of trapping a certain fraction of elongating RNA polymerases that pass through, resulting in locked ternary complexes. Cleavage of the nascent transcript by cleavage factors such as GreA or GreB allows the resumption of elongation from the new 3'terminus. GreA releases sequences of 2 to 3 nucleotides. This chain is Transcription elongation factor GreA, found in Amoebophilus asiaticus (strain 5a2).